The following is a 700-amino-acid chain: Ribonucleoside-diphosphate reductase subunit alpha (700 aa).

Substrate contacts are provided by residues Thr-153, 169 to 170, Gly-198, 380 to 384, and 580 to 584; these read SC, NLCSE, and PTGSI. Cysteines 170 and 409 form a disulfide. Catalysis depends on Asn-380, which acts as the Proton acceptor. The Cysteine radical intermediate role is filled by Cys-382. The active-site Proton acceptor is Glu-384.

Belongs to the ribonucleoside diphosphate reductase large chain family. Tetramer of two alpha and two beta subunits.

It carries out the reaction a 2'-deoxyribonucleoside 5'-diphosphate + [thioredoxin]-disulfide + H2O = a ribonucleoside 5'-diphosphate + [thioredoxin]-dithiol. Under complex allosteric control mediated by deoxynucleoside triphosphates and ATP binding. The type of nucleotide bound at the specificity site determines substrate preference. It seems probable that ATP makes the enzyme reduce CDP and UDP, dGTP favors ADP reduction and dTTP favors GDP reduction. Its function is as follows. Provides the precursors necessary for DNA synthesis. Catalyzes the biosynthesis of deoxyribonucleotides from the corresponding ribonucleotides. The sequence is that of Ribonucleoside-diphosphate reductase subunit alpha from Bacillus subtilis (strain 168).